The sequence spans 188 residues: MKISANSIRTGNILVYNNDLWVVSKTPEHTQPGKGGAYVQVEMKNLKTGTKRNDRFSSSDYLEKAELEQKDCQFLYFEGNNLVLMDTKHFDQINVPKEILEAKLPFLTENMIVKVEFYNDKPLTIVLPPTVILAISETDPVIKGATVTSSYKPAILENGIKVKVPQYLAIGEKIVVKTDDMTYVERAK.

This sequence belongs to the elongation factor P family.

The protein resides in the cytoplasm. It functions in the pathway protein biosynthesis; polypeptide chain elongation. Involved in peptide bond synthesis. Stimulates efficient translation and peptide-bond synthesis on native or reconstituted 70S ribosomes in vitro. Probably functions indirectly by altering the affinity of the ribosome for aminoacyl-tRNA, thus increasing their reactivity as acceptors for peptidyl transferase. The protein is Elongation factor P (efp) of Rickettsia prowazekii (strain Madrid E).